Reading from the N-terminus, the 449-residue chain is Protein trichome birefringence-like 35 (449 aa).

Residues 12 to 29 (LPLAGLLFILVVTFMILF) traverse the membrane as a helical; Signal-anchor for type II membrane protein segment. The GDS motif signature appears at 185–187 (GDS). Residues 428 to 442 (DCTHWCVPGVPDVWN) carry the DCXHWCLPGXXDXWN motif motif.

Belongs to the PC-esterase family. TBL subfamily.

Its subcellular location is the membrane. Functionally, may act as a bridging protein that binds pectin and other cell wall polysaccharides. Probably involved in maintaining esterification of pectins. May be involved in the specific O-acetylation of cell wall polymers. In Arabidopsis thaliana (Mouse-ear cress), this protein is Protein trichome birefringence-like 35 (TBL35).